Reading from the N-terminus, the 1024-residue chain is Multidrug resistance protein MdtC (1024 aa).

The next 12 helical transmembrane spans lie at 3–23, 333–353, 360–380, 387–407, 431–451, 463–483, 528–548, 853–873, 875–895, 897–917, 953–973, and 984–1004; these read FLSL…ALVL, EVEQ…FAFL, LIPA…MYLC, LSLM…IVVL, VGFT…PLLM, FAIT…TLTP, WALL…ISMP, LWLI…LYES, VHPL…LLAL, LFNT…IGIV, PIIM…LSSG, and ITIV…TPVV.

It belongs to the resistance-nodulation-cell division (RND) (TC 2.A.6) family. MdtC subfamily. In terms of assembly, part of a tripartite efflux system composed of MdtA, MdtB and MdtC. MdtC forms a heteromultimer with MdtB.

It localises to the cell inner membrane. The protein is Multidrug resistance protein MdtC of Erwinia amylovora (strain ATCC 49946 / CCPPB 0273 / Ea273 / 27-3).